A 167-amino-acid chain; its full sequence is Nascent polypeptide-associated complex subunit beta (167 aa).

Disordered regions lie at residues 1–48 and 133–167; these read MDQA…GADD and QNMQKNQAGAEGKKDDEEDDIPDLVEGQDFESKVE. Basic residues predominate over residues 25 to 42; that stretch reads NRNRGKGTPRRKVKKVHK. One can recognise an NAC-A/B domain in the interval 45–110; sequence GADDKKLQAT…GEEKELTELV (66 aa). Residues 148-161 are compositionally biased toward acidic residues; sequence DEEDDIPDLVEGQD.

This sequence belongs to the NAC-beta family. As to quaternary structure, part of the nascent polypeptide-associated complex (NAC), consisting of egd2 and egd1. NAC associates with ribosomes via egd1.

Its subcellular location is the cytoplasm. It is found in the nucleus. In terms of biological role, component of the nascent polypeptide-associated complex (NAC), a dynamic component of the ribosomal exit tunnel, protecting the emerging polypeptides from interaction with other cytoplasmic proteins to ensure appropriate nascent protein targeting. The NAC complex also promotes mitochondrial protein import by enhancing productive ribosome interactions with the outer mitochondrial membrane and blocks the inappropriate interaction of ribosomes translating non-secretory nascent polypeptides with translocation sites in the membrane of the endoplasmic reticulum. EGD1 may act as a transcription factor that exert a negative effect on the expression of several genes that are transcribed by RNA polymerase II. This Aspergillus terreus (strain NIH 2624 / FGSC A1156) protein is Nascent polypeptide-associated complex subunit beta (egd1).